A 209-amino-acid chain; its full sequence is Uridine kinase (209 aa).

Position 12 to 19 (12 to 19 (GGSGGGKT)) interacts with ATP.

This sequence belongs to the uridine kinase family.

Its subcellular location is the cytoplasm. The enzyme catalyses uridine + ATP = UMP + ADP + H(+). It carries out the reaction cytidine + ATP = CMP + ADP + H(+). Its pathway is pyrimidine metabolism; CTP biosynthesis via salvage pathway; CTP from cytidine: step 1/3. The protein operates within pyrimidine metabolism; UMP biosynthesis via salvage pathway; UMP from uridine: step 1/1. The sequence is that of Uridine kinase from Streptococcus agalactiae serotype V (strain ATCC BAA-611 / 2603 V/R).